We begin with the raw amino-acid sequence, 154 residues long: Egg-lysin (154 aa).

The signal sequence occupies residues 1 to 18 (MKLLVLWVFAMMATVAMS).

Monomer. Homodimer. Molecules associate into dimers and then rapidly dissociate again. Interacts (as a monomer) with the egg vitelline layer protein VERL (via VERL repeats); each VERL chain can bind multiple copies of lysin. In terms of tissue distribution, sperm.

It localises to the cytoplasmic vesicle. The protein localises to the secretory vesicle. It is found in the acrosome lumen. Functionally, creates a 3 um hole in the egg vitelline layer through which the sperm passes. Does not have enzyme activity. Species-specific interaction between the sperm protein lysin and the egg protein VERL exposes a basic surface on lysin that may dissociate the egg vitelline layer via electrostatic repulsion. Plays a role in ensuring species-specific fertilization. The protein is Egg-lysin of Haliotis fulgens (Green abalone).